A 139-amino-acid polypeptide reads, in one-letter code: Holo-[acyl-carrier-protein] synthase (139 aa).

2 residues coordinate Mg(2+): Asp8 and Glu61.

Belongs to the P-Pant transferase superfamily. AcpS family. It depends on Mg(2+) as a cofactor.

It is found in the cytoplasm. The enzyme catalyses apo-[ACP] + CoA = holo-[ACP] + adenosine 3',5'-bisphosphate + H(+). Functionally, transfers the 4'-phosphopantetheine moiety from coenzyme A to a Ser of acyl-carrier-protein. This is Holo-[acyl-carrier-protein] synthase from Nitrobacter winogradskyi (strain ATCC 25391 / DSM 10237 / CIP 104748 / NCIMB 11846 / Nb-255).